A 396-amino-acid chain; its full sequence is Cathepsin D (396 aa).

The signal sequence occupies residues 1–18 (MKFLYLFLFAVFAWTSDA). Residues 19 to 61 (IVRIPLKKFRSIRRTLSDSGLNVEQLLAGTNSLQHNQGFPSSN) constitute a propeptide, activation peptide. Residues 76–393 (YYGEIGLGTP…DRESNRVGFA (318 aa)) enclose the Peptidase A1 domain. D94 is an active-site residue. A disulfide bond links C107 and C114. An N-linked (GlcNAc...) asparagine glycan is attached at N131. C272 and C276 are oxidised to a cystine. Residue D281 is part of the active site. An intrachain disulfide couples C315 to C352.

It belongs to the peptidase A1 family. Monomer.

Its subcellular location is the lysosome. It carries out the reaction Specificity similar to, but narrower than, that of pepsin A. Does not cleave the 4-Gln-|-His-5 bond in B chain of insulin.. With respect to regulation, inhibited by pepstatin. Acid protease active in intracellular protein breakdown. This chain is Cathepsin D (ctsd), found in Clupea harengus (Atlantic herring).